The primary structure comprises 561 residues: 2-methylisocitrate lyase, mitochondrial (561 aa).

Residues 154 to 177 (KAQSMHDRKQWDTRRKMSPDERSK) are disordered. Basic and acidic residues predominate over residues 157–177 (SMHDRKQWDTRRKMSPDERSK). Cys-228 is a catalytic residue.

Belongs to the isocitrate lyase/PEP mutase superfamily. Isocitrate lyase family. It depends on Mg(2+) as a cofactor.

It is found in the mitochondrion matrix. The catalysed reaction is (2S,3R)-3-hydroxybutane-1,2,3-tricarboxylate = pyruvate + succinate. Its pathway is organic acid metabolism; propanoate degradation. In terms of biological role, component of the methylcitrate cycle that catalyzes the formation of pyruvate and succinate from 2-methylisocitrate during the metabolism of endogenous propionyl-CoA. Plays an important role for growth and development, but also in antagonism, root colonization and induction of defense responses in plants. The sequence is that of 2-methylisocitrate lyase, mitochondrial from Hypocrea atroviridis (strain ATCC 20476 / IMI 206040) (Trichoderma atroviride).